A 504-amino-acid polypeptide reads, in one-letter code: Glutamate--tRNA ligase (504 aa).

The 'HIGH' region motif lies at 12-22; the sequence is PSPTGALHIGG. The short motif at 260-264 is the 'KMSKS' region element; that stretch reads KLSKR. Lys-263 contacts ATP.

The protein belongs to the class-I aminoacyl-tRNA synthetase family. Glutamate--tRNA ligase type 1 subfamily. Monomer.

It localises to the cytoplasm. It catalyses the reaction tRNA(Glu) + L-glutamate + ATP = L-glutamyl-tRNA(Glu) + AMP + diphosphate. Functionally, catalyzes the attachment of glutamate to tRNA(Glu) in a two-step reaction: glutamate is first activated by ATP to form Glu-AMP and then transferred to the acceptor end of tRNA(Glu). This chain is Glutamate--tRNA ligase, found in Bacteroides thetaiotaomicron (strain ATCC 29148 / DSM 2079 / JCM 5827 / CCUG 10774 / NCTC 10582 / VPI-5482 / E50).